Here is a 201-residue protein sequence, read N- to C-terminus: 3-isopropylmalate dehydratase small subunit (201 aa).

It belongs to the LeuD family. LeuD type 1 subfamily. As to quaternary structure, heterodimer of LeuC and LeuD.

It catalyses the reaction (2R,3S)-3-isopropylmalate = (2S)-2-isopropylmalate. Its pathway is amino-acid biosynthesis; L-leucine biosynthesis; L-leucine from 3-methyl-2-oxobutanoate: step 2/4. Its function is as follows. Catalyzes the isomerization between 2-isopropylmalate and 3-isopropylmalate, via the formation of 2-isopropylmaleate. This chain is 3-isopropylmalate dehydratase small subunit, found in Parvibaculum lavamentivorans (strain DS-1 / DSM 13023 / NCIMB 13966).